The following is a 194-amino-acid chain: GTP cyclohydrolase-2 (194 aa).

50–54 provides a ligand contact to GTP; the sequence is RIHSE. Cysteine 55, cysteine 66, and cysteine 68 together coordinate Zn(2+). GTP-binding positions include 94 to 96 and threonine 116; that span reads EGR. Catalysis depends on aspartate 128, which acts as the Proton acceptor. Catalysis depends on arginine 130, which acts as the Nucleophile. 2 residues coordinate GTP: threonine 151 and lysine 156.

The protein belongs to the GTP cyclohydrolase II family. Requires Zn(2+) as cofactor.

The catalysed reaction is GTP + 4 H2O = 2,5-diamino-6-hydroxy-4-(5-phosphoribosylamino)-pyrimidine + formate + 2 phosphate + 3 H(+). The protein operates within cofactor biosynthesis; riboflavin biosynthesis; 5-amino-6-(D-ribitylamino)uracil from GTP: step 1/4. Catalyzes the conversion of GTP to 2,5-diamino-6-ribosylamino-4(3H)-pyrimidinone 5'-phosphate (DARP), formate and pyrophosphate. In Helicobacter hepaticus (strain ATCC 51449 / 3B1), this protein is GTP cyclohydrolase-2.